The primary structure comprises 61 residues: Ferredoxin-3 (61 aa).

2 consecutive 4Fe-4S ferredoxin-type domains span residues tyrosine 2–glycine 31 and lysine 32–asparagine 61. Residues cysteine 11 and cysteine 17 each coordinate [3Fe-4S] cluster. Residues cysteine 21, cysteine 41, cysteine 44, and cysteine 47 each contribute to the [4Fe-4S] cluster site. Cysteine 51 lines the [3Fe-4S] cluster pocket.

[3Fe-4S] cluster serves as cofactor. It depends on [4Fe-4S] cluster as a cofactor.

Its function is as follows. Ferredoxins are iron-sulfur proteins that transfer electrons in a wide variety of metabolic reactions. The chain is Ferredoxin-3 from Desulfocurvibacter africanus (Desulfovibrio africanus).